The sequence spans 1249 residues: Cilia- and flagella-associated protein 57 (1249 aa).

WD repeat units follow at residues 105–148 (FQVQ…AIIK), 195–233 (GESSNYLAHAWVSEDRVIVGTDTGKLFLFESGDQRWETS), 335–374 (SDKQDVLCLCFSPSEETLIASTNKNQLYSITMSLTEISKG), 386–425 (LHSASITGLDTCIRKPLIATCSLDRSVRIWNYESNTLELY), 427–469 (EYQE…KEYS), 471–506 (RGCKECSFSNGGHLFAAVNGNVIHIFTTTSLENINI), 509–548 (GHTGKIRSLVWNLDDSKLVSAGTDGAVYEWNLSTGKRETE), and 635–674 (AHAGPVMKMLLTFDDQFLLTVGEDGCLFTWKVFDKDGRGI). Coiled-coil stretches lie at residues 690-1056 (KTDM…KTDL) and 1094-1165 (SDLQ…SALK).

This sequence belongs to the CFAP57 family. May form homodimers. Associates with components of the nexin-dynein regulatory complex (N-DRC) and the CFAP184:CFAP263 complex. Predominanly expressed in testis, lung and skin. Weak expression in brain and kidney.

It is found in the cytoplasm. It localises to the cytoskeleton. Its subcellular location is the cilium axoneme. Functionally, associates with components of the nexin-dynein regulatory complex (N-DRC), a key regulator of ciliary/flagellar motility, and might act as an inner dynein arm (IDA) hub or linkage. This Mus musculus (Mouse) protein is Cilia- and flagella-associated protein 57.